We begin with the raw amino-acid sequence, 1018 residues long: Fibronectin-binding protein A (1018 aa).

A signal peptide spans Met-1–Ala-36. Residues Tyr-7 to Ser-18 carry the YSIRK-G/S signaling motif motif. The tract at residues Ala-37 to Asn-511 is ligand-binding A region. Disordered regions lie at residues Ser-38–Gln-61 and Ala-78–Thr-195. Polar residues-rich tracts occupy residues Glu-39–Gln-61 and Ala-78–Thr-92. Positions Thr-112–Val-126 are enriched in basic and acidic residues. Residues Thr-129–Gln-139 are compositionally biased toward polar residues. The segment at Gly-194–Asn-511 is fibrinogen/elastin/tropoelastin-binding. The fibronectin-binding stretch occupies residues Gly-512–Thr-872. One copy of the B-1 repeat lies at Glu-545–Ile-574. Positions Glu-545–Ser-604 are 2 X approximate tandem repeats. The B-2 repeat unit spans residues Glu-575–Ser-604. Disordered stretches follow at residues Gly-595–His-622, Leu-740–Phe-813, and Glu-827–Phe-997. The stretch at Gly-745–His-782 is one D-1 repeat. Residues Gly-745–Pro-878 form a 4 X approximate tandem repeats region. A D-2 repeat occupies Gly-783–His-820. The D-3 repeat unit spans residues Gly-821 to Ser-859. The segment covering Glu-827–Pro-838 has biased composition (basic and acidic residues). Residues Gly-860–Pro-878 form a D-4; truncated repeat. Residues Pro-875–Pro-938 show a composition bias toward pro residues. WR repeat units follow at residues Pro-879–Thr-892, Pro-893–Thr-906, Pro-907–Thr-920, Pro-921–Lys-934, and Pro-935–Lys-948. The 5 X tandem repeats, Pro-rich (WR) stretch occupies residues Pro-879–Lys-948. Residues Leu-982–Gly-986 carry the LPXTG sorting signal motif. A Pentaglycyl murein peptidoglycan amidated threonine modification is found at Thr-985. The propeptide at Gly-986–Ala-1018 is removed by sortase.

It is found in the secreted. The protein localises to the cell wall. Its function is as follows. Promotes bacterial attachment to multiple substrates, such as fibronectin (Fn), fibrinogen (Fg), elastin peptides and tropoelastin. This confers to S.aureus the ability to invade endothelial cells. Promotes adherence to and aggregation of activated platelets. The chain is Fibronectin-binding protein A from Staphylococcus aureus (strain USA300).